Reading from the N-terminus, the 280-residue chain is uncharacterized protein (280 aa).

Positions 1–78 (MDVIQRIKEK…VLLAQSISRA (78 aa)) constitute an HTH rpiR-type domain. Residues 37 to 57 (ISDLSEKAGVKSEASVVKFYK) constitute a DNA-binding region (H-T-H motif). In terms of domain architecture, SIS spans 123–263 (TVDLFKNAQR…YTLLAARDPR (141 aa)).

This is an uncharacterized protein from Thermotoga maritima (strain ATCC 43589 / DSM 3109 / JCM 10099 / NBRC 100826 / MSB8).